The sequence spans 241 residues: tRNA pseudouridine synthase B (241 aa).

D45 (nucleophile) is an active-site residue.

It belongs to the pseudouridine synthase TruB family. Type 1 subfamily.

The catalysed reaction is uridine(55) in tRNA = pseudouridine(55) in tRNA. Responsible for synthesis of pseudouridine from uracil-55 in the psi GC loop of transfer RNAs. The polypeptide is tRNA pseudouridine synthase B (Opitutus terrae (strain DSM 11246 / JCM 15787 / PB90-1)).